Reading from the N-terminus, the 391-residue chain is MFGTATSANATRVLLLGSGELGKEVAIECQRLGLEVIACDRYADAPAMQVAHRSYVLDMLDGKALEEIINKEQPAYVVPEIEAIATDKLVDLEEKGLNVVPTAKATKLTMNREGIRRLAAEELDLSTSPYRFADNYDDFKAAVEHVGIPCVVKPVMSSSGKGQSVIKTEDDIEKAWDYAQEGGRTGAGRVIVEGFIDFDYEITLLTVRAVDGVHFCAPIGHRQEDGDYRESWQPQAMSENAIKAAEYTAEKVVNALSGYGIFGVELFVKGDKVIFNEVSPRPHDTGMVTMISQEMSEFALHVRAFTGMPINKIVQYGPSASAVILGQGTSTDIRFDNLAKALAQPQTQVRLFGKPEIDGRRRLGVVLTRRKTIEESVQDAVENAKKVKIVY.

Residues 20–21 (EL) and glutamate 80 each bind N(1)-(5-phospho-beta-D-ribosyl)glycinamide. ATP is bound by residues arginine 112, lysine 153, 158-163 (SSGKGQ), 193-196 (EGFI), and glutamate 201. In terms of domain architecture, ATP-grasp spans 117-306 (RLAAEELDLS…EFALHVRAFT (190 aa)). Mg(2+) contacts are provided by glutamate 265 and glutamate 277. N(1)-(5-phospho-beta-D-ribosyl)glycinamide contacts are provided by residues aspartate 284, lysine 354, and 361–362 (RR).

The protein belongs to the PurK/PurT family. As to quaternary structure, homodimer.

The catalysed reaction is N(1)-(5-phospho-beta-D-ribosyl)glycinamide + formate + ATP = N(2)-formyl-N(1)-(5-phospho-beta-D-ribosyl)glycinamide + ADP + phosphate + H(+). It participates in purine metabolism; IMP biosynthesis via de novo pathway; N(2)-formyl-N(1)-(5-phospho-D-ribosyl)glycinamide from N(1)-(5-phospho-D-ribosyl)glycinamide (formate route): step 1/1. Its function is as follows. Involved in the de novo purine biosynthesis. Catalyzes the transfer of formate to 5-phospho-ribosyl-glycinamide (GAR), producing 5-phospho-ribosyl-N-formylglycinamide (FGAR). Formate is provided by PurU via hydrolysis of 10-formyl-tetrahydrofolate. The polypeptide is Formate-dependent phosphoribosylglycinamide formyltransferase (Vibrio parahaemolyticus serotype O3:K6 (strain RIMD 2210633)).